Consider the following 446-residue polypeptide: MGREIITLQAGQCGNQIGSQFWQQLCLEHGIGPDGTLESFATEGVDRKDVFFYQSDDTRYIPRAILIDLEPRVVNNILSDTYGSLYNPENILITKNGGGAGNNWANGYSHAERIFEDIMDMIDREADGSDSLEGFSLLHSIAGGTGSGLGSFLLERLNDRYPKKIIQTYSVFPNSQSVSDVVVQPYNSLLALKRLTLNADSVVVLDNAALAHIAADRLHTQNPTFHQQNQLVSTVMSASTTTLRYPGYMNNDLVSIIASLIPSPRCHFLLTSYTPFTNQQVEEAKAIRKTTVLDVMRRLLLPKNQMVSVNPSKKSCFISILDIIQGEADPADVHKSLLRIRERRYASFIPWGPASIQVALSKKSPYIKTNHRVSGLMLANHTSIASLFKRTLDQYDRLRKRNAFLEQYKKEAIFEDDLNEFDSSRDVVADLINEYEACEDPNYLSL.

Residue 142 to 148 coordinates GTP; sequence AGGTGSG.

It belongs to the tubulin family. Interacts with mto1. Interacts with mto2.

The protein resides in the cytoplasm. The protein localises to the cytoskeleton. Its subcellular location is the microtubule organizing center. It localises to the spindle pole body. Tubulin is the major constituent of microtubules. The gamma chain is found at microtubule organizing centers (MTOC) such as the spindle poles or the centrosome, suggesting that it is involved in the minus-end nucleation of microtubule assembly. The protein is Tubulin gamma chain of Schizosaccharomyces pombe (strain 972 / ATCC 24843) (Fission yeast).